A 225-amino-acid polypeptide reads, in one-letter code: RNA chaperone ProQ (225 aa).

A disordered region spans residues 107–169; sequence KARVQAQRAA…VAAKAPREER (63 aa). Residues 109 to 118 show a composition bias toward low complexity; sequence RVQAQRAAQQ. A compositionally biased stretch (basic residues) spans 137-146; the sequence is RERKPRPQQP. Residues 147–156 are compositionally biased toward basic and acidic residues; the sequence is RRKEGAEQRK.

It belongs to the ProQ family.

The protein localises to the cytoplasm. Functionally, RNA chaperone with significant RNA binding, RNA strand exchange and RNA duplexing activities. May regulate ProP activity through an RNA-based, post-transcriptional mechanism. This chain is RNA chaperone ProQ, found in Klebsiella pneumoniae subsp. pneumoniae (strain ATCC 700721 / MGH 78578).